The following is a 900-amino-acid chain: Alanine--tRNA ligase (900 aa).

Positions 580, 584, 683, and 687 each coordinate Zn(2+).

Belongs to the class-II aminoacyl-tRNA synthetase family. Zn(2+) is required as a cofactor.

The protein resides in the cytoplasm. It carries out the reaction tRNA(Ala) + L-alanine + ATP = L-alanyl-tRNA(Ala) + AMP + diphosphate. In terms of biological role, catalyzes the attachment of alanine to tRNA(Ala) in a two-step reaction: alanine is first activated by ATP to form Ala-AMP and then transferred to the acceptor end of tRNA(Ala). Also edits incorrectly charged Ser-tRNA(Ala) and Gly-tRNA(Ala) via its editing domain. The sequence is that of Alanine--tRNA ligase from Mycolicibacterium paratuberculosis (strain ATCC BAA-968 / K-10) (Mycobacterium paratuberculosis).